A 471-amino-acid chain; its full sequence is UDP-N-acetylmuramate--L-alanine ligase (471 aa).

125–131 (GTHGKTT) contributes to the ATP binding site.

This sequence belongs to the MurCDEF family.

The protein localises to the cytoplasm. The enzyme catalyses UDP-N-acetyl-alpha-D-muramate + L-alanine + ATP = UDP-N-acetyl-alpha-D-muramoyl-L-alanine + ADP + phosphate + H(+). It participates in cell wall biogenesis; peptidoglycan biosynthesis. In terms of biological role, cell wall formation. The protein is UDP-N-acetylmuramate--L-alanine ligase of Kineococcus radiotolerans (strain ATCC BAA-149 / DSM 14245 / SRS30216).